We begin with the raw amino-acid sequence, 879 residues long: Translation initiation factor IF-2 (879 aa).

A disordered region spans residues 48-261 (EAFPPPPEPA…RPHKSKKQRR (214 aa)). The span at 82-111 (PAADAAAPPAVTTPPSAAPAGATTSAPSDA) shows a compositional bias: low complexity. Pro residues-rich tracts occupy residues 119–142 (PPRP…PSGP), 152–163 (SPMPRPMPPRPV), and 173–197 (PGIP…PPRP). The span at 198 to 213 (AAGRAAPGRGAPIRLP) shows a compositional bias: low complexity. Gly residues predominate over residues 228 to 246 (PGVGGRGRGAPGGAFGRGP). The span at 251 to 260 (SRPHKSKKQR) shows a compositional bias: basic residues. Residues 372-543 (PRPPVVTVMG…AILLTADAAL (172 aa)) enclose the tr-type G domain. The segment at 381–388 (GHVDHGKT) is G1. 381–388 (GHVDHGKT) provides a ligand contact to GTP. Residues 406–410 (GITQH) form a G2 region. A G3 region spans residues 431–434 (DTPG). Residues 431 to 435 (DTPGH) and 485 to 488 (NKID) contribute to the GTP site. The tract at residues 485–488 (NKID) is G4. The segment at 521 to 523 (SAL) is G5.

This sequence belongs to the TRAFAC class translation factor GTPase superfamily. Classic translation factor GTPase family. IF-2 subfamily.

The protein localises to the cytoplasm. Functionally, one of the essential components for the initiation of protein synthesis. Protects formylmethionyl-tRNA from spontaneous hydrolysis and promotes its binding to the 30S ribosomal subunits. Also involved in the hydrolysis of GTP during the formation of the 70S ribosomal complex. The polypeptide is Translation initiation factor IF-2 (Acidothermus cellulolyticus (strain ATCC 43068 / DSM 8971 / 11B)).